Here is a 189-residue protein sequence, read N- to C-terminus: Large ribosomal subunit protein bL9 (189 aa).

Belongs to the bacterial ribosomal protein bL9 family.

Functionally, binds to the 23S rRNA. In Brucella canis (strain ATCC 23365 / NCTC 10854 / RM-666), this protein is Large ribosomal subunit protein bL9.